Consider the following 409-residue polypeptide: Argininosuccinate synthase (409 aa).

ATP contacts are provided by residues 12 to 20 (AYSGGLDTS) and A39. Y91 contributes to the L-citrulline binding site. An ATP-binding site is contributed by G121. Residues T123, N127, and D128 each contribute to the L-aspartate site. N127 is a binding site for L-citrulline. R131, S180, S189, E265, and Y277 together coordinate L-citrulline.

It belongs to the argininosuccinate synthase family. Type 1 subfamily. Homotetramer.

The protein localises to the cytoplasm. It carries out the reaction L-citrulline + L-aspartate + ATP = 2-(N(omega)-L-arginino)succinate + AMP + diphosphate + H(+). Its pathway is amino-acid biosynthesis; L-arginine biosynthesis; L-arginine from L-ornithine and carbamoyl phosphate: step 2/3. This Buchnera aphidicola subsp. Baizongia pistaciae (strain Bp) protein is Argininosuccinate synthase.